The primary structure comprises 515 residues: ATP-dependent rRNA helicase rrp-3 (515 aa).

The disordered stretch occupies residues 1 to 85; the sequence is MSTKRRKTSD…LDVAPEQEEV (85 aa). Positions 15–24 are enriched in low complexity; it reads LKKAAAPSAP. Over residues 25 to 55 the composition is skewed to basic and acidic residues; the sequence is ELKKEKKVKDKSTKDKSSTKKTEKTEKKQDA. Residues 69 to 85 show a composition bias toward acidic residues; sequence TEEDSVTLDVAPEQEEV. Residues 90–118 carry the Q motif motif; that stretch reads KTFKDLGIVDALCEACERLGYKNPTPIQE. In terms of domain architecture, Helicase ATP-binding spans 121–292; it reads IPLALQNRDI…RASLRDPLKV (172 aa). 134–141 is an ATP binding site; that stretch reads AETGSGKT. Residues 240–243 carry the DEAD box motif; sequence DEAD. A Helicase C-terminal domain is found at 316–464; sequence HKDTYLVYLC…EYPLEKDEVM (149 aa). Residues 482–515 are disordered; the sequence is KSLMENQGKHGGLLKRKRGNGQGGGRDHMDAEEG. Positions 506-515 are enriched in basic and acidic residues; it reads GRDHMDAEEG.

Belongs to the DEAD box helicase family. DDX47/RRP3 subfamily.

The protein localises to the nucleus. In terms of biological role, required for pre-ribosomal RNA processing. Involved in the maturation of the 35S-pre-rRNA and to its cleavage to mature 18S rRNA. This is ATP-dependent rRNA helicase rrp-3 (rrp-3) from Neurospora crassa (strain ATCC 24698 / 74-OR23-1A / CBS 708.71 / DSM 1257 / FGSC 987).